A 314-amino-acid polypeptide reads, in one-letter code: Deoxyhypusine hydroxylase (314 aa).

M1 is subject to N-acetylmethionine. HEAT-like PBS-type repeat units follow at residues 61–87 (LAHE…VLND), 94–120 (VRHE…SLSS), 188–214 (ERYA…SLSA), 219–245 (LRHE…VLRD), and 252–278 (VRHE…FSKD). Fe cation is bound by residues H63, E64, H96, and E97. 4 residues coordinate Fe cation: H221, E222, H254, and E255.

This sequence belongs to the deoxyhypusine hydroxylase family. It depends on Fe(2+) as a cofactor.

It carries out the reaction [eIF5A protein]-deoxyhypusine + AH2 + O2 = [eIF5A protein]-hypusine + A + H2O. It participates in protein modification; eIF5A hypusination. Catalyzes the hydroxylation of the N(6)-(4-aminobutyl)-L-lysine intermediate to form hypusine, an essential post-translational modification only found in mature eIF-5A factor. The polypeptide is Deoxyhypusine hydroxylase (Arabidopsis thaliana (Mouse-ear cress)).